The chain runs to 331 residues: Ketol-acid reductoisomerase (NADP(+)) (331 aa).

The KARI N-terminal Rossmann domain occupies 2 to 182 (AQLFYDSDAD…GGTRAGILET (181 aa)). NADP(+)-binding positions include 25–28 (YGSQ), Ser-51, Ser-53, and 83–86 (DEFQ). His-108 is an active-site residue. Position 134 (Gly-134) interacts with NADP(+). The 146-residue stretch at 183–328 (NFKEETETDL…KGLRSMFSWL (146 aa)) folds into the KARI C-terminal knotted domain. Mg(2+) is bound by residues Asp-191, Glu-195, Glu-227, and Glu-231. Substrate is bound at residue Ser-252.

Belongs to the ketol-acid reductoisomerase family. Mg(2+) serves as cofactor.

It catalyses the reaction (2R)-2,3-dihydroxy-3-methylbutanoate + NADP(+) = (2S)-2-acetolactate + NADPH + H(+). The catalysed reaction is (2R,3R)-2,3-dihydroxy-3-methylpentanoate + NADP(+) = (S)-2-ethyl-2-hydroxy-3-oxobutanoate + NADPH + H(+). The protein operates within amino-acid biosynthesis; L-isoleucine biosynthesis; L-isoleucine from 2-oxobutanoate: step 2/4. It functions in the pathway amino-acid biosynthesis; L-valine biosynthesis; L-valine from pyruvate: step 2/4. Functionally, involved in the biosynthesis of branched-chain amino acids (BCAA). Catalyzes an alkyl-migration followed by a ketol-acid reduction of (S)-2-acetolactate (S2AL) to yield (R)-2,3-dihydroxy-isovalerate. In the isomerase reaction, S2AL is rearranged via a Mg-dependent methyl migration to produce 3-hydroxy-3-methyl-2-ketobutyrate (HMKB). In the reductase reaction, this 2-ketoacid undergoes a metal-dependent reduction by NADPH to yield (R)-2,3-dihydroxy-isovalerate. This chain is Ketol-acid reductoisomerase (NADP(+)), found in Synechococcus sp. (strain CC9605).